The chain runs to 632 residues: Mediator of RNA polymerase II transcription subunit 17 (632 aa).

Disordered stretches follow at residues 1 to 21 (MSDS…RPDS) and 50 to 72 (EDKH…DLET). Over residues 11–21 (PIREKRDRPDS) the composition is skewed to basic and acidic residues. The span at 58–72 (EEDDEGDKESTDLET) shows a compositional bias: acidic residues.

The protein belongs to the Mediator complex subunit 17 family. Component of the Mediator complex.

It is found in the nucleus. Functionally, component of the Mediator complex, a coactivator involved in the regulated transcription of nearly all RNA polymerase II-dependent genes. Mediator functions as a bridge to convey information from gene-specific regulatory proteins to the basal RNA polymerase II transcription machinery. Mediator is recruited to promoters by direct interactions with regulatory proteins and serves as a scaffold for the assembly of a functional preinitiation complex with RNA polymerase II and the general transcription factors. This chain is Mediator of RNA polymerase II transcription subunit 17 (srb4), found in Emericella nidulans (strain FGSC A4 / ATCC 38163 / CBS 112.46 / NRRL 194 / M139) (Aspergillus nidulans).